A 94-amino-acid chain; its full sequence is Small ribosomal subunit protein uS17 (94 aa).

This sequence belongs to the universal ribosomal protein uS17 family. As to quaternary structure, part of the 30S ribosomal subunit.

Functionally, one of the primary rRNA binding proteins, it binds specifically to the 5'-end of 16S ribosomal RNA. This Streptomyces avermitilis (strain ATCC 31267 / DSM 46492 / JCM 5070 / NBRC 14893 / NCIMB 12804 / NRRL 8165 / MA-4680) protein is Small ribosomal subunit protein uS17.